The primary structure comprises 127 residues: 3-aminoacrylate deaminase RutC (127 aa).

The protein belongs to the RutC family.

It catalyses the reaction (Z)-3-aminoacrylate + H2O + H(+) = 3-oxopropanoate + NH4(+). In terms of biological role, involved in pyrimidine catabolism. Catalyzes the deamination of 3-aminoacrylate to malonic semialdehyde, a reaction that can also occur spontaneously. RutC may facilitate the reaction and modulate the metabolic fitness, rather than catalyzing essential functions. This chain is 3-aminoacrylate deaminase RutC, found in Pseudomonas savastanoi pv. phaseolicola (strain 1448A / Race 6) (Pseudomonas syringae pv. phaseolicola (strain 1448A / Race 6)).